Consider the following 370-residue polypeptide: S-adenosylmethionine:tRNA ribosyltransferase-isomerase (370 aa).

Belongs to the QueA family. Monomer.

It is found in the cytoplasm. The enzyme catalyses 7-aminomethyl-7-carbaguanosine(34) in tRNA + S-adenosyl-L-methionine = epoxyqueuosine(34) in tRNA + adenine + L-methionine + 2 H(+). The protein operates within tRNA modification; tRNA-queuosine biosynthesis. Functionally, transfers and isomerizes the ribose moiety from AdoMet to the 7-aminomethyl group of 7-deazaguanine (preQ1-tRNA) to give epoxyqueuosine (oQ-tRNA). The sequence is that of S-adenosylmethionine:tRNA ribosyltransferase-isomerase from Prochlorococcus marinus (strain SARG / CCMP1375 / SS120).